Reading from the N-terminus, the 605-residue chain is Elongation factor 4 (605 aa).

Residues 9-192 (GMIRNFCIIA…AIVARVPAPA (184 aa)) form the tr-type G domain. Residues 21–26 (DHGKST) and 139–142 (NKID) each bind GTP.

It belongs to the TRAFAC class translation factor GTPase superfamily. Classic translation factor GTPase family. LepA subfamily.

It localises to the cell inner membrane. The enzyme catalyses GTP + H2O = GDP + phosphate + H(+). Its function is as follows. Required for accurate and efficient protein synthesis under certain stress conditions. May act as a fidelity factor of the translation reaction, by catalyzing a one-codon backward translocation of tRNAs on improperly translocated ribosomes. Back-translocation proceeds from a post-translocation (POST) complex to a pre-translocation (PRE) complex, thus giving elongation factor G a second chance to translocate the tRNAs correctly. Binds to ribosomes in a GTP-dependent manner. In Chlorobaculum tepidum (strain ATCC 49652 / DSM 12025 / NBRC 103806 / TLS) (Chlorobium tepidum), this protein is Elongation factor 4.